The following is a 239-amino-acid chain: Uridylate kinase (239 aa).

Residue 13 to 16 coordinates ATP; it reads KVSG. Gly-55 contacts UMP. ATP is bound by residues Gly-56 and Arg-60. UMP contacts are provided by residues Asp-75 and 136–143; that span reads TGNPFCTT. ATP-binding residues include Thr-163, Gln-164, Tyr-169, and Asp-172.

The protein belongs to the UMP kinase family. As to quaternary structure, homohexamer.

Its subcellular location is the cytoplasm. The catalysed reaction is UMP + ATP = UDP + ADP. Its pathway is pyrimidine metabolism; CTP biosynthesis via de novo pathway; UDP from UMP (UMPK route): step 1/1. Its activity is regulated as follows. Inhibited by UTP. In terms of biological role, catalyzes the reversible phosphorylation of UMP to UDP. In Rickettsia bellii (strain RML369-C), this protein is Uridylate kinase.